Reading from the N-terminus, the 195-residue chain is Probable septum site-determining protein MinC (195 aa).

The protein belongs to the MinC family. Interacts with MinD and FtsZ.

In terms of biological role, cell division inhibitor that blocks the formation of polar Z ring septums. Rapidly oscillates between the poles of the cell to destabilize FtsZ filaments that have formed before they mature into polar Z rings. Prevents FtsZ polymerization. This Helicobacter pylori (strain P12) protein is Probable septum site-determining protein MinC.